The primary structure comprises 238 residues: tRNA (guanine-N(7)-)-methyltransferase (238 aa).

4 residues coordinate S-adenosyl-L-methionine: Glu68, Glu93, Asp120, and Asp143. Asp143 is an active-site residue. Residues Lys147, Asp179, and Thr216–Glu219 contribute to the substrate site.

Belongs to the class I-like SAM-binding methyltransferase superfamily. TrmB family.

It catalyses the reaction guanosine(46) in tRNA + S-adenosyl-L-methionine = N(7)-methylguanosine(46) in tRNA + S-adenosyl-L-homocysteine. It functions in the pathway tRNA modification; N(7)-methylguanine-tRNA biosynthesis. Its function is as follows. Catalyzes the formation of N(7)-methylguanine at position 46 (m7G46) in tRNA. This is tRNA (guanine-N(7)-)-methyltransferase from Shewanella woodyi (strain ATCC 51908 / MS32).